Here is a 117-residue protein sequence, read N- to C-terminus: Large-conductance mechanosensitive channel (117 aa).

Helical transmembrane passes span 7–27 (EFAL…GAAF), 30–50 (IVTS…FGSV), and 64–84 (GLFI…FIFV).

This sequence belongs to the MscL family. Homopentamer.

The protein localises to the cell membrane. In terms of biological role, channel that opens in response to stretch forces in the membrane lipid bilayer. May participate in the regulation of osmotic pressure changes within the cell. This chain is Large-conductance mechanosensitive channel, found in Staphylococcus haemolyticus (strain JCSC1435).